An 874-amino-acid chain; its full sequence is Alanine--tRNA ligase (874 aa).

His564, His568, Cys665, and His669 together coordinate Zn(2+).

It belongs to the class-II aminoacyl-tRNA synthetase family. The cofactor is Zn(2+).

Its subcellular location is the cytoplasm. It carries out the reaction tRNA(Ala) + L-alanine + ATP = L-alanyl-tRNA(Ala) + AMP + diphosphate. Its function is as follows. Catalyzes the attachment of alanine to tRNA(Ala) in a two-step reaction: alanine is first activated by ATP to form Ala-AMP and then transferred to the acceptor end of tRNA(Ala). Also edits incorrectly charged Ser-tRNA(Ala) and Gly-tRNA(Ala) via its editing domain. The polypeptide is Alanine--tRNA ligase (Burkholderia pseudomallei (strain 1106a)).